The following is a 417-amino-acid chain: Serine/threonine-protein kinase SBK1 (417 aa).

In terms of domain architecture, Protein kinase spans 53–318 (YELVRELGKG…VFRFLKHELT (266 aa)). Residues 59-67 (LGKGTYGKV) and Lys-82 each bind ATP. The active-site Proton acceptor is Asp-174. A disordered region spans residues 321–405 (LRRRPSHRAR…TDGRTDKSKG (85 aa)). Positions 363–382 (PSPPSVGPVVPVPVPVPVPV) are enriched in pro residues.

Belongs to the protein kinase superfamily. Ser/Thr protein kinase family.

It localises to the cytoplasm. The enzyme catalyses L-seryl-[protein] + ATP = O-phospho-L-seryl-[protein] + ADP + H(+). It carries out the reaction L-threonyl-[protein] + ATP = O-phospho-L-threonyl-[protein] + ADP + H(+). Its function is as follows. May be involved in signal-transduction pathways related to the control of brain development. In Mus musculus (Mouse), this protein is Serine/threonine-protein kinase SBK1 (Sbk1).